A 108-amino-acid chain; its full sequence is Phosphoribosyl-ATP pyrophosphatase (108 aa).

The protein belongs to the PRA-PH family.

Its subcellular location is the cytoplasm. It catalyses the reaction 1-(5-phospho-beta-D-ribosyl)-ATP + H2O = 1-(5-phospho-beta-D-ribosyl)-5'-AMP + diphosphate + H(+). It functions in the pathway amino-acid biosynthesis; L-histidine biosynthesis; L-histidine from 5-phospho-alpha-D-ribose 1-diphosphate: step 2/9. In Thiobacillus denitrificans (strain ATCC 25259 / T1), this protein is Phosphoribosyl-ATP pyrophosphatase.